Reading from the N-terminus, the 34-residue chain is GCDLSTCATHNLVNELNKFDKSKPSSGGVGPESP.

A disulfide bridge connects residues C2 and C7. P34 is subject to Proline amide.

This Odorrana schmackeri (Schmacker's frog) protein is Calcitonin-like peptide 1.